A 118-amino-acid polypeptide reads, in one-letter code: Non-specific lipid-transfer protein (118 aa).

The signal sequence occupies residues 1–25; it reads MDCIRILWSVAVGLLLVSWRPTMFA. 4 cysteine pairs are disulfide-bonded: cysteine 30–cysteine 76, cysteine 40–cysteine 53, cysteine 54–cysteine 98, and cysteine 74–cysteine 113.

Belongs to the plant LTP family.

Plant non-specific lipid-transfer proteins transfer phospholipids as well as galactolipids across membranes. May play a role in wax or cutin deposition in the cell walls of expanding epidermal cells and certain secretory tissues. This is Non-specific lipid-transfer protein from Ambrosia artemisiifolia (Common ragweed).